A 277-amino-acid chain; its full sequence is Caspase-3 (277 aa).

Residue Met1 is modified to N-acetylmethionine. Propeptides lie at residues 1 to 9 (MENTENSVD) and 10 to 28 (SKSI…KSVD). Lys11 bears the N6-acetyllysine mark. Ser26 is modified (phosphoserine). Active-site residues include His121 and Cys163. At Cys163 the chain carries S-nitrosocysteine; in inhibited form.

This sequence belongs to the peptidase C14A family. Heterotetramer that consists of two anti-parallel arranged heterodimers, each one formed by a 17 kDa (p17) and a 12 kDa (p12) subunit. Interacts with BIRC6/bruce. Post-translationally, cleavage by granzyme B, caspase-6, caspase-8 and caspase-10 generates the two active subunits. Additional processing of the propeptides is likely due to the autocatalytic activity of the activated protease. Active heterodimers between the small subunit of caspase-7 protease and the large subunit of caspase-3 also occur and vice versa. In terms of processing, S-nitrosylated on its catalytic site cysteine in unstimulated cell lines and denitrosylated upon activation of the Fas apoptotic pathway, associated with an increase in intracellular caspase activity. Fas therefore activates caspase-3 not only by inducing the cleavage of the caspase zymogen to its active subunits, but also by stimulating the denitrosylation of its active site thiol. Ubiquitinated by BIRC6; this activity is inhibited by DIABLO/SMAC.

It is found in the cytoplasm. It catalyses the reaction Strict requirement for an Asp residue at positions P1 and P4. It has a preferred cleavage sequence of Asp-Xaa-Xaa-Asp-|- with a hydrophobic amino-acid residue at P2 and a hydrophilic amino-acid residue at P3, although Val or Ala are also accepted at this position.. With respect to regulation, inhibited by BIRC6; following inhibition of BIRC6-caspase binding by DIABLO/SMAC, BIRC6 is subjected to caspase cleavage, leading to an increase in active caspases. Its function is as follows. Involved in the activation cascade of caspases responsible for apoptosis execution. At the onset of apoptosis, it proteolytically cleaves poly(ADP-ribose) polymerase PARP1 at a '216-Asp-|-Gly-217' bond. Cleaves and activates sterol regulatory element binding proteins (SREBPs) between the basic helix-loop-helix leucine zipper domain and the membrane attachment domain. Cleaves and activates caspase-6, -7 and -9 (CASP6, CASP7 and CASP9, respectively). Cleaves and inactivates interleukin-18 (IL18). Triggers cell adhesion in sympathetic neurons through RET cleavage. Cleaves IL-1 beta between an Asp and an Ala, releasing the mature cytokine which is involved in a variety of inflammatory processes. Cleaves and inhibits serine/threonine-protein kinase AKT1 in response to oxidative stress. Acts as an inhibitor of type I interferon production during virus-induced apoptosis by mediating cleavage of antiviral proteins CGAS, IRF3 and MAVS, thereby preventing cytokine overproduction. Also involved in pyroptosis by mediating cleavage and activation of gasdermin-E (GSDME). Cleaves XRCC4 and phospholipid scramblase proteins XKR4, XKR8 and XKR9, leading to promote phosphatidylserine exposure on apoptotic cell surface. Cleaves BIRC6 following inhibition of BIRC6-caspase binding by DIABLO/SMAC. This is Caspase-3 (CASP3) from Macaca fascicularis (Crab-eating macaque).